We begin with the raw amino-acid sequence, 100 residues long: Small ubiquitin-related modifier 1 (100 aa).

Residues 1-12 (MSAAGEEDKKPA) are compositionally biased toward basic and acidic residues. The interval 1–23 (MSAAGEEDKKPAGGEGGGAHINL) is disordered. One can recognise a Ubiquitin-like domain in the interval 19-96 (AHINLKVKGQ…IDAMLHQTGG (78 aa)). Gly96 is covalently cross-linked (Glycyl lysine isopeptide (Gly-Lys) (interchain with K-? in acceptor proteins)).

Belongs to the ubiquitin family. SUMO subfamily. Interacts with SAE2, SCE1 and SIZ1. Covalently attached to a number of proteins.

The protein localises to the nucleus. It is found in the cytoplasm. Ubiquitin-like protein which can be covalently attached to target lysines as a monomer. Does not seem to be involved in protein degradation and may function as an antagonist of ubiquitin in the degradation process. The protein is Small ubiquitin-related modifier 1 (SUMO1) of Oryza sativa subsp. japonica (Rice).